The following is a 494-amino-acid chain: Serine/threonine-protein kinase cst-1 (494 aa).

The tract at residues 1–27 (MPPSTDSSRRNSEEGFSDGFKLDSSAL) is disordered. One can recognise a Protein kinase domain in the interval 35–286 (FDIVGKLGEG…ALRLCEHTFI (252 aa)). Residues 41-49 (LGEGSYGSV) and Lys-64 contribute to the ATP site. Asp-154 acts as the Proton acceptor in catalysis. The interval 364 to 413 (IPKSAYGSSRNNGSPRVQPPGHTASACDPSNNPPFAEEGTGPNFQIGTSE) is disordered. Positions 369–378 (YGSSRNNGSP) are enriched in polar residues. The SARAH domain occupies 443-490 (FEFLRNITLDELIRRKESLDSEMEEEIRELQRRYKTKRQPILDVIEIK).

The protein belongs to the protein kinase superfamily. STE Ser/Thr protein kinase family. STE20 subfamily. Mg(2+) is required as a cofactor. In terms of processing, proteolytically cleaved by caspase-3 during apoptosis which results in kinase activation.

It catalyses the reaction L-seryl-[protein] + ATP = O-phospho-L-seryl-[protein] + ADP + H(+). It carries out the reaction L-threonyl-[protein] + ATP = O-phospho-L-threonyl-[protein] + ADP + H(+). In terms of biological role, serine/threonine-protein kinase which extends lifespan and delays tissue aging, probably by activating daf-16. The polypeptide is Serine/threonine-protein kinase cst-1 (cst-1) (Caenorhabditis briggsae).